The following is a 691-amino-acid chain: Gex-3-interacting protein 13 (691 aa).

2 disordered regions span residues 18–97 (TASL…SAHL) and 171–195 (PASPCTTAASAPSVESTPTKRKRQR). The segment covering 31–46 (SSFTTTSESTSPPYSS) has biased composition (low complexity). The segment covering 47 to 57 (SEHHSPTDQRT) has biased composition (basic and acidic residues). Residues 58-79 (ETPTSDSGNASFSPENVATSFE) are compositionally biased toward polar residues. The segment covering 171 to 183 (PASPCTTAASAPS) has biased composition (low complexity). 2 BED-type zinc fingers span residues 194-242 (QRRN…YEKV) and 424-473 (LRRH…YEKV). The Zn(2+) site is built by cysteine 212, cysteine 215, histidine 230, histidine 235, cysteine 443, cysteine 446, histidine 461, and histidine 466.

Interacts with gex-3.

This is Gex-3-interacting protein 13 (gei-13) from Caenorhabditis elegans.